The sequence spans 554 residues: Trichloroethene reductive dehalogenase (554 aa).

Residues 1-42 (MSEKYHSTVTRRDFMKRLGLAGAGAGALGAAVLAENNLPHEF) constitute a signal peptide (tat-type signal). 2 consecutive 4Fe-4S ferredoxin-type domains span residues 425 to 457 (PTKPIDAGIREFCKTCGICAEHCPTQAISHEGP) and 471 to 500 (EGWHLDYHKCINCTICEAVCPFFTMSNNSW). [4Fe-4S] cluster contacts are provided by Cys437, Cys440, Cys443, Cys447, Cys480, Cys483, Cys486, and Cys490.

The protein belongs to the PceA family. The cofactor is [4Fe-4S] cluster. Requires corrinoid as cofactor. Post-translationally, predicted to be exported by the Tat system. The position of the signal peptide cleavage has been experimentally proven.

The protein resides in the cell membrane. It carries out the reaction trichloroethene + AH2 = (Z)-1,2-dichloroethene + chloride + A + H(+). The enzyme catalyses (Z)-1,2-dichloroethene + AH2 = chloroethene + chloride + A + H(+). The catalysed reaction is 1,1-dichloroethene + AH2 = chloroethene + chloride + A + H(+). Its activity is regulated as follows. Loses 93% of its activity upon incubation with 1-iodopropane and titanium(III) citrate in the dark. Subsequent exposure to light restores 80% of the original activity. Completely inhibited by 2 mM sodium sulfite or sodium dithionite, and by 1 mM cuprous chloride. In terms of biological role, catalyzes the reductive dechlorination of trichloroethene (TCE) to cis-1,2-dichloroethene (DCE) and of cis-1,2-dichloroethene to chloroethene. The substrate specificity is broad, and the enzyme can dehalogenate various substrates, including 1,1-dichloroethene (1,1-DCE), 1,2-dichloroethane and 1,2-dibromoethane. A variety of other haloalkanes and haloalkenes containing three to five carbon atoms are dehalogenated at lower rates. Trans-1,2-dichloroethene (trans-DCE) and chloroethene are degraded at rates which are approximately 2 orders of magnitude lower. Titanium(III) citrate and methyl viologen can be used as reductants. This Dehalococcoides mccartyi (strain ATCC BAA-2266 / KCTC 15142 / 195) (Dehalococcoides ethenogenes (strain 195)) protein is Trichloroethene reductive dehalogenase.